Consider the following 151-residue polypeptide: Acidic phospholipase A2 2 (151 aa).

Residues 1-27 (MYPAHLLVLLAVCVSLLGAASIPARPL) form the signal peptide. Cystine bridges form between Cys38–Cys104, Cys54–Cys151, Cys56–Cys72, Cys71–Cys132, Cys78–Cys125, Cys88–Cys118, and Cys111–Cys123. Positions 55, 57, and 59 each coordinate Ca(2+). The active site involves His75. Asp76 contributes to the Ca(2+) binding site. Residue Asp126 is part of the active site.

It belongs to the phospholipase A2 family. Group I subfamily. D49 sub-subfamily. Ca(2+) serves as cofactor. In terms of tissue distribution, expressed by the venom gland.

Its subcellular location is the secreted. It catalyses the reaction a 1,2-diacyl-sn-glycero-3-phosphocholine + H2O = a 1-acyl-sn-glycero-3-phosphocholine + a fatty acid + H(+). PLA2 catalyzes the calcium-dependent hydrolysis of the 2-acyl groups in 3-sn-phosphoglycerides. This Tropidechis carinatus (Australian rough-scaled snake) protein is Acidic phospholipase A2 2.